Here is a 323-residue protein sequence, read N- to C-terminus: Fructose-1,6-bisphosphatase class 1 (323 aa).

Glu-88, Asp-107, Leu-109, and Asp-110 together coordinate Mg(2+). Residues 110–113 and Asn-200 each bind substrate; that span reads DGSS. Position 272 (Glu-272) interacts with Mg(2+).

This sequence belongs to the FBPase class 1 family. Homotetramer. Mg(2+) serves as cofactor.

It localises to the cytoplasm. It carries out the reaction beta-D-fructose 1,6-bisphosphate + H2O = beta-D-fructose 6-phosphate + phosphate. It functions in the pathway carbohydrate biosynthesis; gluconeogenesis. The chain is Fructose-1,6-bisphosphatase class 1 from Acinetobacter baumannii (strain ACICU).